We begin with the raw amino-acid sequence, 198 residues long: Ion-translocating oxidoreductase complex subunit B (198 aa).

The tract at residues 1–26 (MTTIMIAVLAIALLATLFGAILGFAS) is hydrophobic. One can recognise a 4Fe-4S domain in the interval 32–90 (EADPIVDQIDAILPQTQCGQCGYPGCRPYAEAIANGDSINKCPPGGQATIEKLADLMGV). [4Fe-4S] cluster contacts are provided by C49, C52, C57, C73, C114, C117, C120, C124, C144, C147, C150, and C154. 2 consecutive 4Fe-4S ferredoxin-type domains span residues 105–134 (KVAFIHEDMCIGCTKCIQACPVDAIVGGTK) and 135–164 (ALHTVIKDECTGCDLCVAPCPTDCIEMIPL).

The protein belongs to the 4Fe4S bacterial-type ferredoxin family. RnfB subfamily. In terms of assembly, the complex is composed of six subunits: RnfA, RnfB, RnfC, RnfD, RnfE and RnfG. [4Fe-4S] cluster serves as cofactor.

The protein resides in the cell inner membrane. In terms of biological role, part of a membrane-bound complex that couples electron transfer with translocation of ions across the membrane. The polypeptide is Ion-translocating oxidoreductase complex subunit B (Vibrio vulnificus (strain CMCP6)).